The chain runs to 373 residues: D-alanine--D-alanine ligase (373 aa).

In terms of domain architecture, ATP-grasp spans 165 to 369; the sequence is KRLAREAGIP…FGDLVSALIA (205 aa). 192–247 contributes to the ATP binding site; it reads KERLGLPVFVKPARGGSSIGISKVDSWEEFDAAIDLAFSNDNKVIVEAMIHGAEVE. The Mg(2+) site is built by Asp-324, Glu-336, and Asn-338.

This sequence belongs to the D-alanine--D-alanine ligase family. It depends on Mg(2+) as a cofactor. Mn(2+) is required as a cofactor.

The protein localises to the cytoplasm. It catalyses the reaction 2 D-alanine + ATP = D-alanyl-D-alanine + ADP + phosphate + H(+). It participates in cell wall biogenesis; peptidoglycan biosynthesis. Its function is as follows. Cell wall formation. This chain is D-alanine--D-alanine ligase, found in Corynebacterium jeikeium (strain K411).